A 637-amino-acid polypeptide reads, in one-letter code: Zinc finger protein rsv2 (637 aa).

6 disordered regions span residues 1–41 (MDTT…SKMN), 145–164 (SNHQ…PTSA), 169–207 (IITA…QPFS), 221–363 (TGAI…STAL), 404–427 (QDSF…TRSY), and 440–558 (SVNP…GAQR). Over residues 172 to 189 (ANSSPSGNAGSNASASMS) the composition is skewed to low complexity. Residues 196–207 (PSASTINDQPFS) are compositionally biased toward polar residues. Positions 279-296 (SDLKRSLGHNQKSDRVSK) are enriched in basic and acidic residues. A compositionally biased stretch (polar residues) spans 298 to 344 (VSPQHQANPSTLNNPLKTQNFDSSKNLYTDNKDSSLVSPTGLQSRME). 2 stretches are compositionally biased toward basic and acidic residues: residues 345 to 355 (QNPEVRAHPMK) and 404 to 413 (QDSFNKESIK). Residues 455–471 (VPSNTTISSSPPLTSPV) show a composition bias toward low complexity. Polar residues-rich tracts occupy residues 472 to 498 (KTSA…QSAA) and 508 to 527 (YYNT…QKVS). Over residues 544-554 (TTPTNSSTTAT) the composition is skewed to low complexity. A C2H2-type 1 zinc finger spans residues 572–603 (VRCTLQNRVTGEICNTVFSRTYDLIRHQDTIH). The C2H2-type 2; degenerate zinc finger occupies 610-635 (FRCEICGDQRHFSRHDALVRHLRVKH).

Its subcellular location is the nucleus. This chain is Zinc finger protein rsv2 (rsv2), found in Schizosaccharomyces pombe (strain 972 / ATCC 24843) (Fission yeast).